The sequence spans 105 residues: Large ribosomal subunit protein uL24 (105 aa).

The protein belongs to the universal ribosomal protein uL24 family. As to quaternary structure, part of the 50S ribosomal subunit.

One of two assembly initiator proteins, it binds directly to the 5'-end of the 23S rRNA, where it nucleates assembly of the 50S subunit. Functionally, one of the proteins that surrounds the polypeptide exit tunnel on the outside of the subunit. This chain is Large ribosomal subunit protein uL24, found in Mycobacterium avium (strain 104).